The primary structure comprises 258 residues: Cytochrome c oxidase subunit 2 (258 aa).

Residues 1–41 (MIVNECLFFTIALCDAAEPWQLGFQDAATPMMQGIIDLHHD) are Mitochondrial intermembrane-facing. A helical transmembrane segment spans residues 42–58 (ILFFLILILVFVLWILV). At 59–82 (RALWHFYYKKNPIPQRIVHGTTIE) the chain is on the mitochondrial matrix side. A helical membrane pass occupies residues 83-104 (ILWTIFPSIILMFIAIPSFALL). Over 105–258 (YSMDEVVVDP…VSNLFIPPTS (154 aa)) the chain is Mitochondrial intermembrane. Positions 187, 222, 224, 226, 230, and 233 each coordinate Cu cation. Glutamate 224 lines the Mg(2+) pocket.

Belongs to the cytochrome c oxidase subunit 2 family. As to quaternary structure, component of the cytochrome c oxidase (complex IV, CIV), a multisubunit enzyme composed of a catalytic core of 3 subunits and several supernumerary subunits. The complex exists as a monomer or a dimer and forms supercomplexes (SCs) in the inner mitochondrial membrane with ubiquinol-cytochrome c oxidoreductase (cytochrome b-c1 complex, complex III, CIII). Cu cation is required as a cofactor.

It localises to the mitochondrion inner membrane. It carries out the reaction 4 Fe(II)-[cytochrome c] + O2 + 8 H(+)(in) = 4 Fe(III)-[cytochrome c] + 2 H2O + 4 H(+)(out). In terms of biological role, component of the cytochrome c oxidase, the last enzyme in the mitochondrial electron transport chain which drives oxidative phosphorylation. The respiratory chain contains 3 multisubunit complexes succinate dehydrogenase (complex II, CII), ubiquinol-cytochrome c oxidoreductase (cytochrome b-c1 complex, complex III, CIII) and cytochrome c oxidase (complex IV, CIV), that cooperate to transfer electrons derived from NADH and succinate to molecular oxygen, creating an electrochemical gradient over the inner membrane that drives transmembrane transport and the ATP synthase. Cytochrome c oxidase is the component of the respiratory chain that catalyzes the reduction of oxygen to water. Electrons originating from reduced cytochrome c in the intermembrane space (IMS) are transferred via the dinuclear copper A center (CU(A)) of subunit 2 and heme A of subunit 1 to the active site in subunit 1, a binuclear center (BNC) formed by heme A3 and copper B (CU(B)). The BNC reduces molecular oxygen to 2 water molecules using 4 electrons from cytochrome c in the IMS and 4 protons from the mitochondrial matrix. The sequence is that of Cytochrome c oxidase subunit 2 (COX2) from Oenothera berteroana (Bertero's evening primrose).